A 219-amino-acid chain; its full sequence is MIHAISAVNRHLYEDVLEQHFRLRHDIFVEERHWETLRRPDGREVDSYDDEDTVYLLALEGRRVVGGHRLYPTTKPSMMSEVFPHLAAVRGCPSDPLIWEWSRYFVVRDRRDGALNLQLMAAVQEFCLDQGIAQVSAIMETWWLPRFHEAGFVVTPLGLPALVENAWTMAATVDIRRQTLDVLHDRIGMPSIVQQDGPRLDAVARANLCGLAAAQRKSA.

It belongs to the autoinducer synthase family.

It catalyses the reaction 3-methylbutanoyl-CoA + S-adenosyl-L-methionine = N-isovaleryl-L-homoserine lactone + S-methyl-5'-thioadenosine + CoA + H(+). Catalyzes the synthesis of IV-HSL (isovaleryl-homoserine lactone), a quorum-sensing (QS) autoinducer molecule which binds to BjaR1 transcriptional regulator to activate expression of QS-dependent genes. Is active with isovaleryl-CoA but cannot use isovaleryl-ACP as acyl donor. In Bradyrhizobium diazoefficiens (strain JCM 10833 / BCRC 13528 / IAM 13628 / NBRC 14792 / USDA 110), this protein is Isovaleryl-homoserine lactone synthase (bjaI).